The primary structure comprises 1930 residues: Transport and Golgi organization protein 1 homolog (1930 aa).

A signal peptide spans 1–24 (MAAAPGLLFWLFVLGALWWVPGQS). Residues 25–1171 (DLSHGRRFSD…EPAAVPPLES (1147 aa)) are Lumenal-facing. One can recognise an SH3 domain in the interval 45 to 107 (MLMYRGKALE…PKDLIKVLHK (63 aa)). Disordered regions lie at residues 144–263 (LELE…REKT), 317–496 (EEEE…AAEK), 547–737 (LGSS…MNSQ), 754–891 (TKQP…TPEI), and 1018–1149 (TAPL…PVGA). The segment covering 152-189 (EESKKAEEVSQHREKSPEESRGRELDPVPEPEAFRADS) has biased composition (basic and acidic residues). Polar residues predominate over residues 197-211 (SESTEGLQGQPSAQE). Residue serine 229 is modified to Phosphoserine. Residues 247 to 256 (ESRTGNSSPA) are compositionally biased toward polar residues. Acidic residues predominate over residues 317-330 (EEEEEVEEDADSSD). Residues 338 to 368 (SDKDEKVPGKPMIEKYLTDKDPNLSEEDKVE) are compositionally biased toward basic and acidic residues. N-linked (GlcNAc...) asparagine glycosylation occurs at asparagine 360. The span at 420 to 430 (DSEDEGDDLFV) shows a compositional bias: acidic residues. Basic and acidic residues-rich tracts occupy residues 431-442 (EEPKTNDVKDSE) and 451-461 (GEEKDIQESRK). Asparagine 631 carries an N-linked (GlcNAc...) asparagine glycan. Over residues 661-677 (EDGTDAEQARAIRRPQE) the composition is skewed to basic and acidic residues. Residues 692-701 (DEEEEEEEGD) show a composition bias toward acidic residues. Residues 715–726 (VSAQQSRENSPS) are compositionally biased toward polar residues. The segment covering 791-800 (EESHLADMRA) has biased composition (basic and acidic residues). Phosphoserine is present on serine 856. Positions 1030 to 1039 (GWARPGEERQ) are enriched in basic and acidic residues. Polar residues-rich tracts occupy residues 1040-1054 (PPQQDSLPQENTGDL) and 1115-1127 (QPVTGYTSTSEVS). Over residues 1128–1137 (QKPDTKKDID) the composition is skewed to basic and acidic residues. The stretch at 1172 to 1192 (AFGSLYAFILYLSKMLLATLP) is an intramembrane region. Residues 1193-1202 (DNVQPGPDFY) lie on the Lumenal side of the membrane. A helical transmembrane segment spans residues 1203–1223 (GLPWQPVIITAVLGIVSFAIF). The Cytoplasmic segment spans residues 1224–1930 (SWRTILVVKS…DRSQASKPTP (707 aa)). 2 coiled-coil regions span residues 1236–1329 (YQVT…KNQD) and 1359–1422 (LNEA…EIAL). The mediates interaction with MIA2 stretch occupies residues 1238-1677 (VTEKQISEKL…VIVKPMPGRP (440 aa)). The segment at 1447 to 1472 (ESEDPDKGGNESDDLANGETGGDRSE) is disordered. Serine 1458 carries the post-translational modification Phosphoserine. The stretch at 1514–1662 (NLEDQIKKLE…LLEMTQKMAM (149 aa)) forms a coiled coil. Disordered stretches follow at residues 1669 to 1796 (IVKP…VPLM), 1801 to 1820 (PPPIRYGPPPQLCGGPFGPR), and 1840 to 1930 (APGV…KPTP). A compositionally biased stretch (polar residues) spans 1677-1694 (PNTQNPPRRGLLSQNGSF). 2 positions are modified to phosphoserine: serine 1693 and serine 1705. Residues 1706–1715 (PPLPAEPPGR) are compositionally biased toward pro residues. Residues 1722 to 1738 (SRRDTPRSEFGSLDRHL) are compositionally biased toward basic and acidic residues. Serine 1733, serine 1754, serine 1766, and serine 1770 each carry phosphoserine. The segment covering 1760–1773 (PVVNSSSRSSSPAK) has biased composition (low complexity). The interval 1776 to 1930 (DEGKVNMAPK…DRSQASKPTP (155 aa)) is proline-rich domain (PRD); mediates interaction with the COPII coat subunits SEC23A and SEC23B. Residues 1801 to 1811 (PPPIRYGPPPQ) show a composition bias toward pro residues. The residue at position 1805 (arginine 1805) is an Asymmetric dimethylarginine. Positions 1809 to 1869 (PPQLCGGPFG…GHTPFRPPGS (61 aa)) are SEC16A-interacting region (SIR); required for its localization to endoplasmic reticulum exit sites and for its interaction with SEC16A. A compositionally biased stretch (basic and acidic residues) spans 1846 to 1858 (GKRDLPLDPREFL). Over residues 1881-1898 (RLPPPTHGPQEYPPPPPA) the composition is skewed to pro residues. Residue serine 1915 is modified to Phosphoserine. A compositionally biased stretch (polar residues) spans 1915–1930 (SPSSVQDRSQASKPTP).

The protein belongs to the MIA/OTOR family. Tango1 subfamily. As to quaternary structure, interacts with MIA2. Interacts (via SH3 domain) with COL7A1. Interacts with the COPII coat subunits SEC23A, SEC23B and maybe SEC24C. May interact with APOB and MIA2. Interacts with SEC16A.

The protein resides in the endoplasmic reticulum membrane. Plays a role in the transport of cargos that are too large to fit into COPII-coated vesicles and require specific mechanisms to be incorporated into membrane-bound carriers and exported from the endoplasmic reticulum. This protein is required for collagen VII (COL7A1) secretion by loading COL7A1 into transport carriers. It may participate in cargo loading of COL7A1 at endoplasmic reticulum exit sites by binding to COPII coat subunits Sec23/24 and guiding SH3-bound COL7A1 into a growing carrier. Does not play a role in global protein secretion and is apparently specific to COL7A1 cargo loading. However, it may participate in secretion of other proteins in cells that do not secrete COL7A1. It is also specifically required for the secretion of lipoproteins by participating in their export from the endoplasmic reticulum. Required for correct assembly of COPII coat components at endoplasmic reticulum exit sites (ERES) and for the localization of SEC16A and membrane-bound ER-resident complexes consisting of MIA2 and PREB/SEC12 to ERES. This Mus musculus (Mouse) protein is Transport and Golgi organization protein 1 homolog.